Here is a 333-residue protein sequence, read N- to C-terminus: MTHSPSFLQHALSSSDTRAEWPLPGGLAARWLAPGCVELNGDARGADSVLLSCGVHGNETAPIEVVDGMLTDIAAGQLALNCRLLVMFANLDAIRQGVRYGNYDMNRLFNGAHARHPELPESVRAAELETLAAEFFAGARARKLHYDLHTAIRGSVFEKFAIYPFLHDGRTHKREQLAWLQRCGIEAVLLHTQPANTFSYFTSQYCEADAFTLELGKARPFGQNDLSRFSGIDGALRGLLSNPQANVPDLDEDKLPLFRAKYDLVKHSEAFKLNLADSVENFTLLPDGMLIAEDGAVRYQATGGEERILFPNPAVKPGLRAGIVVEPARLPSR.

Zn(2+) contacts are provided by H56, E59, and H149. The active site involves E214.

This sequence belongs to the AspA/AstE family. Succinylglutamate desuccinylase subfamily. It depends on Zn(2+) as a cofactor.

The catalysed reaction is N-succinyl-L-glutamate + H2O = L-glutamate + succinate. It functions in the pathway amino-acid degradation; L-arginine degradation via AST pathway; L-glutamate and succinate from L-arginine: step 5/5. Its function is as follows. Transforms N(2)-succinylglutamate into succinate and glutamate. The protein is Succinylglutamate desuccinylase of Chromobacterium violaceum (strain ATCC 12472 / DSM 30191 / JCM 1249 / CCUG 213 / NBRC 12614 / NCIMB 9131 / NCTC 9757 / MK).